A 548-amino-acid chain; its full sequence is ATP synthase subunit alpha (548 aa).

172–179 provides a ligand contact to ATP; sequence GDRKTGKT. The disordered stretch occupies residues 510–548; the sequence is QFTTSSGESAAPSEPEAEALAADEVGQETVKVNRPAPKK. The segment covering 514–531 has biased composition (low complexity); it reads SSGESAAPSEPEAEALAA.

The protein belongs to the ATPase alpha/beta chains family. As to quaternary structure, F-type ATPases have 2 components, CF(1) - the catalytic core - and CF(0) - the membrane proton channel. CF(1) has five subunits: alpha(3), beta(3), gamma(1), delta(1), epsilon(1). CF(0) has three main subunits: a(1), b(2) and c(9-12). The alpha and beta chains form an alternating ring which encloses part of the gamma chain. CF(1) is attached to CF(0) by a central stalk formed by the gamma and epsilon chains, while a peripheral stalk is formed by the delta and b chains.

It is found in the cell membrane. It carries out the reaction ATP + H2O + 4 H(+)(in) = ADP + phosphate + 5 H(+)(out). Produces ATP from ADP in the presence of a proton gradient across the membrane. The alpha chain is a regulatory subunit. In Saccharopolyspora erythraea (strain ATCC 11635 / DSM 40517 / JCM 4748 / NBRC 13426 / NCIMB 8594 / NRRL 2338), this protein is ATP synthase subunit alpha.